A 1411-amino-acid chain; its full sequence is DNA-directed RNA polymerase subunit beta' (1411 aa).

Residues Cys70, Cys72, Cys85, and Cys88 each contribute to the Zn(2+) site. Residues Asp458, Asp460, and Asp462 each contribute to the Mg(2+) site. Zn(2+)-binding residues include Cys813, Cys887, Cys894, and Cys897. Residues 1384-1411 form a disordered region; sequence AEAAEMATTGSDEAPEVEGSGVESGSAE.

This sequence belongs to the RNA polymerase beta' chain family. The RNAP catalytic core consists of 2 alpha, 1 beta, 1 beta' and 1 omega subunit. When a sigma factor is associated with the core the holoenzyme is formed, which can initiate transcription. Requires Mg(2+) as cofactor. Zn(2+) serves as cofactor.

The catalysed reaction is RNA(n) + a ribonucleoside 5'-triphosphate = RNA(n+1) + diphosphate. Its function is as follows. DNA-dependent RNA polymerase catalyzes the transcription of DNA into RNA using the four ribonucleoside triphosphates as substrates. The sequence is that of DNA-directed RNA polymerase subunit beta' from Paracidovorax citrulli (strain AAC00-1) (Acidovorax citrulli).